We begin with the raw amino-acid sequence, 234 residues long: RNA-binding protein pno1 (234 aa).

The tract at residues 1 to 39 (MPTQDSAAKQADDGFQLVQKKSRKRKMTMDMDDADPKAG) is disordered. A KH domain is found at 158 to 207 (LARCIGRLAGKGGRTKFTIENVTKTRIVLADSKVHILGSYQNIRAARTAL).

It belongs to the PNO1 family.

The protein localises to the nucleus. It localises to the nucleolus. The sequence is that of RNA-binding protein pno1 from Ixodes scapularis (Black-legged tick).